The sequence spans 686 residues: Ovotransferrin (686 aa).

Transferrin-like domains follow at residues 7–333 (VRWC…SLRK) and 345–670 (IQWC…SLNT). Cystine bridges form between Cys-10–Cys-45, Cys-20–Cys-36, Cys-115–Cys-197, Cys-160–Cys-174, Cys-171–Cys-182, and Cys-228–Cys-242. The connecting region stretch occupies residues 333 to 341 (KDQLTVGPR). Intrachain disulfides connect Cys-348–Cys-380, Cys-358–Cys-371, Cys-405–Cys-680, Cys-421–Cys-643, Cys-454–Cys-530, Cys-478–Cys-671, Cys-488–Cys-502, Cys-499–Cys-513, and Cys-570–Cys-584. An N-linked (GlcNAc...) asparagine glycan is attached at Asn-473. Asn-548 carries an N-linked (GlcNAc...) asparagine glycan.

Belongs to the transferrin family. In terms of assembly, monomer.

It localises to the secreted. Functionally, transferrins are iron binding transport proteins which can bind two Fe(3+) ions in association with the binding of an anion, usually bicarbonate. It is responsible for the transport of iron from sites of absorption and heme degradation to those of storage and utilization. Serum transferrin may also have a further role in stimulating cell proliferation. In terms of biological role, ovotransferrin has a bacteriostatic function. Its concentration in avian egg is the highest concentration of any transferrin in vivo. The sequence is that of Ovotransferrin from Anas platyrhynchos (Mallard).